A 95-amino-acid chain; its full sequence is Small integral membrane protein 18 (95 aa).

A helical membrane pass occupies residues 35 to 55 (CFVILLLFIFTVVSLVVLAFL).

It is found in the membrane. This Homo sapiens (Human) protein is Small integral membrane protein 18 (SMIM18).